The primary structure comprises 226 residues: Endonuclease V (226 aa).

2 residues coordinate Mg(2+): Asp42 and Asp110.

It belongs to the endonuclease V family. Mg(2+) is required as a cofactor.

The protein resides in the cytoplasm. The catalysed reaction is Endonucleolytic cleavage at apurinic or apyrimidinic sites to products with a 5'-phosphate.. Functionally, DNA repair enzyme involved in the repair of deaminated bases. Selectively cleaves double-stranded DNA at the second phosphodiester bond 3' to a deoxyinosine leaving behind the intact lesion on the nicked DNA. This is Endonuclease V from Thermus thermophilus (strain ATCC BAA-163 / DSM 7039 / HB27).